The primary structure comprises 266 residues: BTB/POZ domain-containing protein KCTD2 (266 aa).

Position 2 is an N-acetylalanine (Ala2). The segment at 38–79 (GRHPADTAASPPPPRTAGARARTSGADGRRRGRPLGPAQRGR) is disordered. Over residues 53–63 (TAGARARTSGA) the composition is skewed to low complexity. One can recognise a BTB domain in the interval 76–174 (QRGRYLLRDT…LVKERIRDNE (99 aa)).

This Mus musculus (Mouse) protein is BTB/POZ domain-containing protein KCTD2 (Kctd2).